Reading from the N-terminus, the 860-residue chain is Ribosome-releasing factor 2, mitochondrial (860 aa).

The tr-type G domain occupies 45–337; that stretch reads DRTRNIGIIA…AVVNFLPSPL (293 aa). Residues 54–61, 118–122, and 172–175 contribute to the GTP site; these read AHIDAGKT, DTPGH, and NKMD.

Belongs to the TRAFAC class translation factor GTPase superfamily. Classic translation factor GTPase family. EF-G/EF-2 subfamily.

It is found in the mitochondrion. In terms of biological role, mitochondrial GTPase that mediates the disassembly of ribosomes from messenger RNA at the termination of mitochondrial protein biosynthesis. Not involved in the GTP-dependent ribosomal translocation step during translation elongation. This Debaryomyces hansenii (strain ATCC 36239 / CBS 767 / BCRC 21394 / JCM 1990 / NBRC 0083 / IGC 2968) (Yeast) protein is Ribosome-releasing factor 2, mitochondrial.